A 575-amino-acid polypeptide reads, in one-letter code: Potassium-transporting ATPase potassium-binding subunit (575 aa).

The next 12 helical transmembrane spans lie at 4–24 (SAWGLLALFLAALLVLAWPVG), 61–81 (LRYAIALLAFNAVGAVFVYAL), 133–153 (GLAVQNFFSAATGIAVAFALI), 180–200 (LWVLVPLSFVLAVFFVSQGVI), 258–278 (LANLLQMIAVFLIPAALCFAF), 289–309 (WAVLAAMTVMFVAAVMVVIPA), 344–364 (IDASALFAAVTTAASCGAVIA), 372–392 (LGGMVPMVLMQLGEVVFGGVG), 394–414 (GLYGMLIFAMLAVFIAGLMIG), 431–451 (LISIAILVTPVLVLAGTAVAV), 499–519 (LLGLAMWLGRFAVIVPVLAIA), and 545–565 (LLIGTVLLVGLLNYVPALALG).

This sequence belongs to the KdpA family. In terms of assembly, the system is composed of three essential subunits: KdpA, KdpB and KdpC.

The protein resides in the cell inner membrane. In terms of biological role, part of the high-affinity ATP-driven potassium transport (or Kdp) system, which catalyzes the hydrolysis of ATP coupled with the electrogenic transport of potassium into the cytoplasm. This subunit binds the periplasmic potassium ions and delivers the ions to the membrane domain of KdpB through an intramembrane tunnel. The sequence is that of Potassium-transporting ATPase potassium-binding subunit from Variovorax paradoxus (strain S110).